A 252-amino-acid chain; its full sequence is UPF0246 protein LJ_0535 (252 aa).

The protein belongs to the UPF0246 family.

The sequence is that of UPF0246 protein LJ_0535 from Lactobacillus johnsonii (strain CNCM I-12250 / La1 / NCC 533).